The primary structure comprises 164 residues: SsrA-binding protein (164 aa).

This sequence belongs to the SmpB family.

Its subcellular location is the cytoplasm. Required for rescue of stalled ribosomes mediated by trans-translation. Binds to transfer-messenger RNA (tmRNA), required for stable association of tmRNA with ribosomes. tmRNA and SmpB together mimic tRNA shape, replacing the anticodon stem-loop with SmpB. tmRNA is encoded by the ssrA gene; the 2 termini fold to resemble tRNA(Ala) and it encodes a 'tag peptide', a short internal open reading frame. During trans-translation Ala-aminoacylated tmRNA acts like a tRNA, entering the A-site of stalled ribosomes, displacing the stalled mRNA. The ribosome then switches to translate the ORF on the tmRNA; the nascent peptide is terminated with the 'tag peptide' encoded by the tmRNA and targeted for degradation. The ribosome is freed to recommence translation, which seems to be the essential function of trans-translation. In Gluconobacter oxydans (strain 621H) (Gluconobacter suboxydans), this protein is SsrA-binding protein.